The primary structure comprises 197 residues: Adenine phosphoribosyltransferase (197 aa).

This sequence belongs to the purine/pyrimidine phosphoribosyltransferase family. As to quaternary structure, homodimer.

The protein resides in the cytoplasm. The catalysed reaction is AMP + diphosphate = 5-phospho-alpha-D-ribose 1-diphosphate + adenine. It participates in purine metabolism; AMP biosynthesis via salvage pathway; AMP from adenine: step 1/1. Functionally, catalyzes a salvage reaction resulting in the formation of AMP, that is energically less costly than de novo synthesis. The sequence is that of Adenine phosphoribosyltransferase from Ralstonia nicotianae (strain ATCC BAA-1114 / GMI1000) (Ralstonia solanacearum).